We begin with the raw amino-acid sequence, 731 residues long: Gelsolin (731 aa).

The interval 2–125 (VVEHPEFLKA…YKKGGVASGF (124 aa)) is actin-severing. The Gelsolin-like 1 repeat unit spans residues 25-107 (FDLVPVPPNL…VQGFESATFL (83 aa)). Tyr35 carries the post-translational modification Phosphotyrosine. Gly41, Asp42, Glu73, Asp85, Gly90, and Ala92 together coordinate Ca(2+). Positions 72-75 (DESG) are actin-actin interfilament contact point. An a 1,2-diacyl-sn-glycero-3-phospho-(1D-myo-inositol-4,5-bisphosphate)-binding site is contributed by 111 to 118 (KSGLKYKK). Val121 lines the Ca(2+) pocket. A 1,2-diacyl-sn-glycero-3-phospho-(1D-myo-inositol-4,5-bisphosphate) is bound at residue 137–145 (RLLQVKGRR). A Gelsolin-like 2 repeat occupies 147–219 (VRATEVPVSW…FEEGAEPEAM (73 aa)). Positions 162 and 163 each coordinate Ca(2+). A disulfide bridge connects residues Cys164 and Cys177. Residues Glu185, Asp235, Glu278, Asp279, and Glu303 each contribute to the Ca(2+) site. A Gelsolin-like 3 repeat occupies 266–338 (DENPFAQGAL…LPEGGETPLF (73 aa)). Phosphotyrosine occurs at positions 358 and 414. Positions 383-731 (AAQHGMDDDG…LDRALAELAA (349 aa)) are actin-binding, Ca-sensitive. The Gelsolin-like 4 repeat unit spans residues 404–485 (SNKVPVDPAT…VQGKEPAHLM (82 aa)). Positions 420, 421, 451, 463, 468, 470, and 500 each coordinate Ca(2+). Residue Lys533 is modified to N6-acetyllysine. Residues 533-591 (KAGALNSNDAFVLKTPSAAYLWVGAGASEAEKTGAQELLRVLRAQPVQVAEGSEPDSFW) form a Gelsolin-like 5 repeat. Residues Asn540 and Asp541 each contribute to the Ca(2+) site. Phosphotyrosine is present on Tyr552. A Ca(2+)-binding site is contributed by Glu563. At Tyr600 the chain carries Phosphotyrosine. The Gelsolin-like 6 repeat unit spans residues 630 to 705 (IEEVPGEFMQ…VKQGFEPPSF (76 aa)). The Ca(2+) site is built by Asp645, Asp646, and Glu668. Thr691 is modified (phosphothreonine).

This sequence belongs to the villin/gelsolin family. As to quaternary structure, binds to actin and to fibronectin. Identified in a complex composed of ACTA1, COBL, GSN and TMSB4X. Interacts with the inactive form of EIF2AK2/PKR. Interacts with FLII.

Its subcellular location is the cytoplasm. The protein localises to the cytoskeleton. In terms of biological role, calcium-regulated, actin-modulating protein that binds to the plus (or barbed) ends of actin monomers or filaments, preventing monomer exchange (end-blocking or capping). It can promote the assembly of monomers into filaments (nucleation) as well as sever filaments already formed. Plays a role in ciliogenesis. The polypeptide is Gelsolin (GSN) (Equus caballus (Horse)).